The sequence spans 334 residues: Tyrosine-protein kinase SRK3 (334 aa).

The SH2 domain maps to 1 to 42 (IRTLDDGGFYMANRISFPTLQNLVSHYMMDADGLAQRLSRPC). Residues 66-321 (IQLQRKLGQG…LKNLLEDYYV (256 aa)) form the Protein kinase domain. ATP contacts are provided by residues 72 to 80 (LGQGNFGEV) and Lys-94. Residue Asp-186 is the Proton acceptor of the active site.

The protein belongs to the protein kinase superfamily. Tyr protein kinase family.

Its subcellular location is the cytoplasm. It carries out the reaction L-tyrosyl-[protein] + ATP = O-phospho-L-tyrosyl-[protein] + ADP + H(+). The polypeptide is Tyrosine-protein kinase SRK3 (SRK3) (Spongilla lacustris (Freshwater sponge)).